Consider the following 333-residue polypeptide: D-alanine--D-alanine ligase (333 aa).

The ATP-grasp domain maps to 124–329 (KMWFSALGIR…FAQYLSGNIM (206 aa)). 154–209 (ALEKWGSIFIKAASQGSSVGCYRVDNKEQLANSLEEAFKYSPYVVVEKTINARELE) serves as a coordination point for ATP. 3 residues coordinate Mg(2+): D283, E296, and N298.

It belongs to the D-alanine--D-alanine ligase family. It depends on Mg(2+) as a cofactor. Mn(2+) serves as cofactor.

It localises to the cytoplasm. The catalysed reaction is 2 D-alanine + ATP = D-alanyl-D-alanine + ADP + phosphate + H(+). It participates in cell wall biogenesis; peptidoglycan biosynthesis. Cell wall formation. The protein is D-alanine--D-alanine ligase of Shewanella halifaxensis (strain HAW-EB4).